We begin with the raw amino-acid sequence, 88 residues long: ATP synthase F(0) complex subunit f, mitochondrial (88 aa).

An N-acetylalanine modification is found at Ala-2. The residue at position 3 (Ser-3) is a Phosphoserine. At Lys-16 the chain carries N6-acetyllysine. The helical transmembrane segment at Met-62–Leu-79 threads the bilayer.

Belongs to the ATPase F chain family. Component of the ATP synthase complex composed at least of ATP5F1A/subunit alpha, ATP5F1B/subunit beta, ATP5MC1/subunit c (homooctomer), MT-ATP6/subunit a, MT-ATP8/subunit 8, ATP5ME/subunit e, ATP5MF/subunit f, ATP5MG/subunit g, ATP5MK/subunit k, ATP5MJ/subunit j, ATP5F1C/subunit gamma, ATP5F1D/subunit delta, ATP5F1E/subunit epsilon, ATP5PF/subunit F6, ATP5PB/subunit b, ATP5PD/subunit d, ATP5PO/subunit OSCP. ATP synthase complex consists of a soluble F(1) head domain (subunits alpha(3) and beta(3)) - the catalytic core - and a membrane F(0) domain - the membrane proton channel (subunits c, a, 8, e, f, g, k and j). These two domains are linked by a central stalk (subunits gamma, delta, and epsilon) rotating inside the F1 region and a stationary peripheral stalk (subunits F6, b, d, and OSCP).

The protein localises to the mitochondrion. It is found in the mitochondrion inner membrane. Its function is as follows. Subunit f, of the mitochondrial membrane ATP synthase complex (F(1)F(0) ATP synthase or Complex V) that produces ATP from ADP in the presence of a proton gradient across the membrane which is generated by electron transport complexes of the respiratory chain. ATP synthase complex consist of a soluble F(1) head domain - the catalytic core - and a membrane F(1) domain - the membrane proton channel. These two domains are linked by a central stalk rotating inside the F(1) region and a stationary peripheral stalk. During catalysis, ATP synthesis in the catalytic domain of F(1) is coupled via a rotary mechanism of the central stalk subunits to proton translocation. In vivo, can only synthesize ATP although its ATP hydrolase activity can be activated artificially in vitro. Part of the complex F(0) domain. The polypeptide is ATP synthase F(0) complex subunit f, mitochondrial (Mus musculus (Mouse)).